A 383-amino-acid polypeptide reads, in one-letter code: tRNA(Met) cytidine acetate ligase (383 aa).

ATP contacts are provided by residues 7-20 (ITEY…HRYH), G101, N150, and R175.

This sequence belongs to the TmcAL family.

It is found in the cytoplasm. It carries out the reaction cytidine(34) in elongator tRNA(Met) + acetate + ATP = N(4)-acetylcytidine(34) in elongator tRNA(Met) + AMP + diphosphate. Catalyzes the formation of N(4)-acetylcytidine (ac(4)C) at the wobble position of elongator tRNA(Met), using acetate and ATP as substrates. First activates an acetate ion to form acetyladenylate (Ac-AMP) and then transfers the acetyl group to tRNA to form ac(4)C34. In Lactiplantibacillus plantarum (strain ATCC BAA-793 / NCIMB 8826 / WCFS1) (Lactobacillus plantarum), this protein is tRNA(Met) cytidine acetate ligase.